The primary structure comprises 83 residues: Ferredoxin (83 aa).

4Fe-4S ferredoxin-type domains are found at residues 2–29 (ALMITDECINCDVCEPECPNGAISQGDE) and 31–64 (YVIEPSLCTECVGHYETSQCVEVCPVDCIIKDPS). Positions 9, 12, 15, 19, 38, 41, 50, and 54 each coordinate [4Fe-4S] cluster.

[4Fe-4S] cluster serves as cofactor.

In terms of biological role, ferredoxins are iron-sulfur proteins that transfer electrons in a wide variety of metabolic reactions. In Allochromatium vinosum (strain ATCC 17899 / DSM 180 / NBRC 103801 / NCIMB 10441 / D) (Chromatium vinosum), this protein is Ferredoxin (fdx).